A 615-amino-acid chain; its full sequence is Erythritol-mannosyl-transferase 1 (615 aa).

Positions 366–387 are disordered; the sequence is RTPNNTGASTPTAPISSPDFEE. Over residues 367–380 the composition is skewed to polar residues; that stretch reads TPNNTGASTPTAPI.

This sequence belongs to the UDP-glycosyltransferase family.

The protein resides in the vacuole membrane. The protein operates within secondary metabolite biosynthesis. Erythritol-mannosyl-transferase; part of the gene cluster that mediates the biosynthesis of mannosylerythritol lipids (MELs), surface-active substances that enhance the availability of water-insoluble substrates. Mannosylerythritol lipid production is responsible for hemolytic activity of Ustilago maydis. Depending on the number of acetyl groups, mannosylerythritol lipids can be differentiated into MEL A (fully acetylated), MEL B and MEL C (monoacetylated at R-6 and R-4, respectively), and the fully deacetylated MEL D. The first step in the pathway is the generation of mannosylerythritol by the glycosyltransferase EMT1 which catalyzes the transfer of GDP-mannose to the C-4 atom of meso-erythritol. This reaction has to be stereospecific, since only mannosyl-D-erythritol is generated. The produced disaccharide is subsequently acylated with fatty acids of various lengths derived from the peroxisomal beta-oxidation by the peroxisomal acyltransferases MAC1 and MAC2 at positions C-2 and C-3, repectively. The existence of MEL derivatives which carry an acetyl group at C-2 implies that at least MAC1 also accepts acetyl-CoA as a donor. The final step of MEL biosynthesis is the acetylation of the fully acylated mannosylerythritol lipids catalyzed by the acetyl-CoA-dependent acetyltransferase MAT1. MAT1 displays a relaxed regioselectivity and is able to transfer acetylgroups to both positions C-4 and C-6 of the mannosyl moiety. This is Erythritol-mannosyl-transferase 1 from Mycosarcoma maydis (Corn smut fungus).